Reading from the N-terminus, the 216-residue chain is Thioredoxin-like 2, chloroplastic (216 aa).

The N-terminal 58 residues, 1–58 (MAEALLPLPRRLVVTASTPACSSASSSTSPSPHCLLSRANPRPPRLAAPSPPRHRRLK), are a transit peptide targeting the chloroplast. Positions 19-40 (PACSSASSSTSPSPHCLLSRAN) are enriched in low complexity. A disordered region spans residues 19-70 (PACSSASSSTSPSPHCLLSRANPRPPRLAAPSPPRHRRLKAHAAVSDKSEQP). Residues 41 to 51 (PRPPRLAAPSP) are compositionally biased toward pro residues. The Thioredoxin domain maps to 61–188 (AAVSDKSEQP…LKDAIAVHNT (128 aa)). Active-site nucleophile residues include cysteine 111 and cysteine 114. Cysteine 111 and cysteine 114 form a disulfide bridge.

The protein belongs to the thioredoxin family.

It is found in the plastid. The protein resides in the chloroplast. Its function is as follows. Probable thiol-disulfide oxidoreductase that may participate in various redox reactions. This is Thioredoxin-like 2, chloroplastic from Oryza sativa subsp. japonica (Rice).